The chain runs to 520 residues: Transactivator/viroplasmin protein (520 aa).

The interval 487 to 520 (KDASADSGPKDGPPPTRSIVEKEDVPTTSSKQVD) is disordered.

The protein belongs to the caulimoviridae viroplasmin family.

It is found in the host cytoplasm. Its function is as follows. Enhances the ribosomal termination-reinitiation event leading to the translation of major open reading frames on the polycistronic viral RNAs. The chain is Transactivator/viroplasmin protein from Arabidopsis thaliana (Mouse-ear cress).